The chain runs to 257 residues: Type III pantothenate kinase (257 aa).

6 to 13 (DVGNTNTV) contributes to the ATP binding site. Substrate-binding positions include tyrosine 102 and 109–112 (GADR). Aspartate 111 functions as the Proton acceptor in the catalytic mechanism. K(+) is bound at residue aspartate 131. An ATP-binding site is contributed by threonine 134. Threonine 186 serves as a coordination point for substrate.

The protein belongs to the type III pantothenate kinase family. Homodimer. Requires NH4(+) as cofactor. K(+) serves as cofactor.

The protein resides in the cytoplasm. The catalysed reaction is (R)-pantothenate + ATP = (R)-4'-phosphopantothenate + ADP + H(+). Its pathway is cofactor biosynthesis; coenzyme A biosynthesis; CoA from (R)-pantothenate: step 1/5. Its function is as follows. Catalyzes the phosphorylation of pantothenate (Pan), the first step in CoA biosynthesis. This is Type III pantothenate kinase from Leptospira borgpetersenii serovar Hardjo-bovis (strain JB197).